Consider the following 321-residue polypeptide: Lipoyl synthase (321 aa).

[4Fe-4S] cluster is bound by residues Cys-68, Cys-73, Cys-79, Cys-94, Cys-98, Cys-101, and Ser-308. Residues 80 to 297 enclose the Radical SAM core domain; it reads FNHGTATFMI…KELAESIGFT (218 aa).

Belongs to the radical SAM superfamily. Lipoyl synthase family. The cofactor is [4Fe-4S] cluster.

It localises to the cytoplasm. It carries out the reaction [[Fe-S] cluster scaffold protein carrying a second [4Fe-4S](2+) cluster] + N(6)-octanoyl-L-lysyl-[protein] + 2 oxidized [2Fe-2S]-[ferredoxin] + 2 S-adenosyl-L-methionine + 4 H(+) = [[Fe-S] cluster scaffold protein] + N(6)-[(R)-dihydrolipoyl]-L-lysyl-[protein] + 4 Fe(3+) + 2 hydrogen sulfide + 2 5'-deoxyadenosine + 2 L-methionine + 2 reduced [2Fe-2S]-[ferredoxin]. The protein operates within protein modification; protein lipoylation via endogenous pathway; protein N(6)-(lipoyl)lysine from octanoyl-[acyl-carrier-protein]: step 2/2. Functionally, catalyzes the radical-mediated insertion of two sulfur atoms into the C-6 and C-8 positions of the octanoyl moiety bound to the lipoyl domains of lipoate-dependent enzymes, thereby converting the octanoylated domains into lipoylated derivatives. The sequence is that of Lipoyl synthase from Shewanella halifaxensis (strain HAW-EB4).